Consider the following 269-residue polypeptide: Protein NETWORKED 3A (269 aa).

One can recognise an NAB domain in the interval 6-87; the sequence is SKWWWIGNHN…ERYDLLRPSS (82 aa). Residues 87 to 113 form a disordered region; sequence SVHKHGSDSESHEKSSTCDESSWSEAC. Basic and acidic residues predominate over residues 91-103; that stretch reads HGSDSESHEKSST. Residues 155-214 are a coiled coil; sequence NGNSEMMKIEIERLREENKVYSEMVREKDEEKREAIRQMSVAIQMLKEENSELKKRVTNT.

The protein belongs to the NET family.

The protein resides in the cytoplasm. It is found in the cytoskeleton. It localises to the nucleus membrane. Functionally, plant-specific actin binding protein. May be part of a membrane-cytoskeletal adapter complex. The protein is Protein NETWORKED 3A of Arabidopsis thaliana (Mouse-ear cress).